The sequence spans 789 residues: Aryl hydrocarbon receptor nuclear translocator (789 aa).

The span at 1-14 shows a compositional bias: polar residues; sequence MAATTANPEMTSDV. A disordered region spans residues 1-97; sequence MAATTANPEM…RLARENHSEI (97 aa). Alanine 2 carries the post-translational modification N-acetylalanine. The span at 26–35 shows a compositional bias: gly residues; that stretch reads SGPGIQGGGA. Lysine 58 participates in a covalent cross-link: Glycyl lysine isopeptide (Lys-Gly) (interchain with G-Cter in SUMO2). Basic and acidic residues predominate over residues 60–97; sequence LRCDDDQMSNDKERFARSDDEQSSADKERLARENHSEI. The residue at position 77 (serine 77) is a Phosphoserine. The segment at 88–128 is DNA-binding; it reads RLARENHSEIERRRRNKMTAYITELSDMVPTCSALARKPDK. Positions 89 to 142 constitute a bHLH domain; the sequence is LARENHSEIERRRRNKMTAYITELSDMVPTCSALARKPDKLTILRMAVSHMKSL. Positions 112-168 are required for heterodimer formation with HIF1A; the sequence is LSDMVPTCSALARKPDKLTILRMAVSHMKSLRGTGNTSTDGSYKPSFLTDQELKHLI. Residues 112-264 are required for heterodimer formation with EPAS1; it reads LSDMVPTCSA…MCMGSRRSFI (153 aa). 2 consecutive PAS domains span residues 161-235 and 349-419; these read DQEL…LTGR and PNCT…VKLK. Positions 167-171 are mediates the transcription activity and dimerization of the AHR:ARNT complex; that stretch reads LILEA. The region spanning 424-467 is the PAC domain; sequence SVMFRFRSKNQEWLWMRTSSFTFQNPYSDEIEYIICTNTNVKNS. Positions 465 to 481 are enriched in polar residues; it reads KNSSQEPRPTLSNTIQR. Disordered regions lie at residues 465-492 and 672-789; these read KNSSQEPRPTLSNTIQRPQLGPTANLPL and TPSS…PFSE. The segment covering 672-696 has biased composition (low complexity); the sequence is TPSSFSSMSLPGAPTASPGAAAYPS. A compositionally biased stretch (polar residues) spans 708–719; sequence TGQTAGQFQTRT. Low complexity-rich tracts occupy residues 723–733 and 743–756; these read VGVWPQWQGQQ and QHVQQPPAQQPGQP.

In terms of assembly, monomer. Homodimer only upon binding to a DNA. Efficient DNA binding requires dimerization with another bHLH protein. Interacts with TACC3. Interacts with HIF1A, EPAS1, NPAS1 and NPAS3; forms a heterodimer that binds core DNA sequence 5'-TACGTG-3' within the hypoxia response element (HRE) of target gene promoters. Forms a heterodimer with AHRR, as well as with other bHLH proteins. Interacts with NOCA7. Interacts with TACC3. Interacts with AHR; the heterodimer ARNT:AHR binds to core DNA sequence 5'-TGCGTG-3' within the dioxin response element (DRE) of target gene promoters and activates their transcription. Interacts with SIM1 and NPAS4.

It is found in the nucleus. Functionally, required for activity of the AHR. Upon ligand binding, AHR translocates into the nucleus, where it heterodimerizes with ARNT and induces transcription by binding to xenobiotic response elements (XRE). Not required for the ligand-binding subunit to translocate from the cytosol to the nucleus after ligand binding. The complex initiates transcription of genes involved in the regulation of a variety of biological processes, including angiogenesis, hematopoiesis, drug and lipid metabolism, cell motility and immune modulation. The heterodimer binds to core DNA sequence 5'-TACGTG-3' within the hypoxia response element (HRE) of target gene promoters and functions as a transcriptional regulator of the adaptive response to hypoxia. The heterodimer ARNT:AHR binds to core DNA sequence 5'-TGCGTG-3' within the dioxin response element (DRE) of target gene promoters and activates their transcription. This chain is Aryl hydrocarbon receptor nuclear translocator, found in Homo sapiens (Human).